Here is a 344-residue protein sequence, read N- to C-terminus: Holliday junction branch migration complex subunit RuvB (344 aa).

The tract at residues 1-182 (MRIELLNTPP…FGINSRFDYY (182 aa)) is large ATPase domain (RuvB-L). Residues I21, R22, G63, K66, T67, T68, 129–131 (EDF), R172, Y182, and R219 contribute to the ATP site. Residue T67 participates in Mg(2+) binding. A small ATPAse domain (RuvB-S) region spans residues 183 to 253 (APELLEGIIR…IAMKTLDCLE (71 aa)). The head domain (RuvB-H) stretch occupies residues 256 to 344 (EEGLDDMDKK…ISLFDAQPTS (89 aa)). Residues R311 and R316 each contribute to the DNA site.

The protein belongs to the RuvB family. Homohexamer. Forms an RuvA(8)-RuvB(12)-Holliday junction (HJ) complex. HJ DNA is sandwiched between 2 RuvA tetramers; dsDNA enters through RuvA and exits via RuvB. An RuvB hexamer assembles on each DNA strand where it exits the tetramer. Each RuvB hexamer is contacted by two RuvA subunits (via domain III) on 2 adjacent RuvB subunits; this complex drives branch migration. In the full resolvosome a probable DNA-RuvA(4)-RuvB(12)-RuvC(2) complex forms which resolves the HJ.

The protein resides in the cytoplasm. The enzyme catalyses ATP + H2O = ADP + phosphate + H(+). Functionally, the RuvA-RuvB-RuvC complex processes Holliday junction (HJ) DNA during genetic recombination and DNA repair, while the RuvA-RuvB complex plays an important role in the rescue of blocked DNA replication forks via replication fork reversal (RFR). RuvA specifically binds to HJ cruciform DNA, conferring on it an open structure. The RuvB hexamer acts as an ATP-dependent pump, pulling dsDNA into and through the RuvAB complex. RuvB forms 2 homohexamers on either side of HJ DNA bound by 1 or 2 RuvA tetramers; 4 subunits per hexamer contact DNA at a time. Coordinated motions by a converter formed by DNA-disengaged RuvB subunits stimulates ATP hydrolysis and nucleotide exchange. Immobilization of the converter enables RuvB to convert the ATP-contained energy into a lever motion, pulling 2 nucleotides of DNA out of the RuvA tetramer per ATP hydrolyzed, thus driving DNA branch migration. The RuvB motors rotate together with the DNA substrate, which together with the progressing nucleotide cycle form the mechanistic basis for DNA recombination by continuous HJ branch migration. Branch migration allows RuvC to scan DNA until it finds its consensus sequence, where it cleaves and resolves cruciform DNA. The sequence is that of Holliday junction branch migration complex subunit RuvB from Pelodictyon phaeoclathratiforme (strain DSM 5477 / BU-1).